Reading from the N-terminus, the 154-residue chain is NADPH-dependent 7-cyano-7-deazaguanine reductase (154 aa).

The active-site Thioimide intermediate is the cysteine 52. The Proton donor role is filled by aspartate 59. Substrate contacts are provided by residues 74-76 (VES) and 93-94 (HE).

This sequence belongs to the GTP cyclohydrolase I family. QueF type 1 subfamily.

The protein localises to the cytoplasm. The enzyme catalyses 7-aminomethyl-7-carbaguanine + 2 NADP(+) = 7-cyano-7-deazaguanine + 2 NADPH + 3 H(+). The protein operates within tRNA modification; tRNA-queuosine biosynthesis. In terms of biological role, catalyzes the NADPH-dependent reduction of 7-cyano-7-deazaguanine (preQ0) to 7-aminomethyl-7-deazaguanine (preQ1). This chain is NADPH-dependent 7-cyano-7-deazaguanine reductase, found in Sinorhizobium medicae (strain WSM419) (Ensifer medicae).